The following is a 140-amino-acid chain: Nucleoside diphosphate kinase (140 aa).

Lys-11, Phe-59, Arg-87, Thr-93, Arg-104, and Asn-114 together coordinate ATP. His-117 serves as the catalytic Pros-phosphohistidine intermediate.

It belongs to the NDK family. Homotetramer. The cofactor is Mg(2+).

The protein resides in the cytoplasm. The catalysed reaction is a 2'-deoxyribonucleoside 5'-diphosphate + ATP = a 2'-deoxyribonucleoside 5'-triphosphate + ADP. It catalyses the reaction a ribonucleoside 5'-diphosphate + ATP = a ribonucleoside 5'-triphosphate + ADP. In terms of biological role, major role in the synthesis of nucleoside triphosphates other than ATP. The ATP gamma phosphate is transferred to the NDP beta phosphate via a ping-pong mechanism, using a phosphorylated active-site intermediate. The sequence is that of Nucleoside diphosphate kinase from Rickettsia typhi (strain ATCC VR-144 / Wilmington).